The chain runs to 341 residues: HTH-type transcriptional repressor PurR (341 aa).

One can recognise an HTH lacI-type domain in the interval 2–56 (ATIKDVAKRAGVSTTTVSHVINKTRFVAEETKAAVRAAIKELHYSPSAVARSLKV). The segment at residues 4-23 (IKDVAKRAGVSTTTVSHVIN) is a DNA-binding region (H-T-H motif). The DNA-binding element occupies 48–56 (SAVARSLKV). 5 residues coordinate hypoxanthine: Y73, R190, T192, F221, and D275.

In terms of assembly, homodimer.

It functions in the pathway purine metabolism; purine nucleotide biosynthesis [regulation]. In terms of biological role, is the main repressor of the genes involved in the de novo synthesis of purine nucleotides, regulating purB, purC, purEK, purF, purHD, purL, purMN and guaBA expression. PurR is allosterically activated to bind its cognate DNA by binding the purine corepressors, hypoxanthine or guanine, thereby effecting transcription repression. The protein is HTH-type transcriptional repressor PurR of Pectobacterium atrosepticum (strain SCRI 1043 / ATCC BAA-672) (Erwinia carotovora subsp. atroseptica).